We begin with the raw amino-acid sequence, 174 residues long: ATP synthase subunit d, mitochondrial (174 aa).

Position 2 is an N-acetylserine (Ser2).

Belongs to the ATPase d subunit family. In terms of assembly, F-type ATPases have 2 components, CF(1) - the catalytic core - and CF(0) - the membrane proton channel. In yeast, the dimeric form of ATP synthase consists of 17 polypeptides: alpha, beta, gamma, delta, epsilon, 4 (B), 5 (OSCP), 6 (A), 8, 9 (C), d, E (Tim11), f, g, h, i/j and k.

It localises to the mitochondrion. Its subcellular location is the mitochondrion inner membrane. Functionally, mitochondrial membrane ATP synthase (F(1)F(0) ATP synthase or Complex V) produces ATP from ADP in the presence of a proton gradient across the membrane which is generated by electron transport complexes of the respiratory chain. F-type ATPases consist of two structural domains, F(1) - containing the extramembraneous catalytic core, and F(0) - containing the membrane proton channel, linked together by a central stalk and a peripheral stalk. During catalysis, ATP synthesis in the catalytic domain of F(1) is coupled via a rotary mechanism of the central stalk subunits to proton translocation. Part of the complex F(0) domain and the peripheric stalk, which acts as a stator to hold the catalytic alpha(3)beta(3) subcomplex and subunit a/ATP6 static relative to the rotary elements. The protein is ATP synthase subunit d, mitochondrial (ATP7) of Saccharomyces cerevisiae (strain ATCC 204508 / S288c) (Baker's yeast).